We begin with the raw amino-acid sequence, 64 residues long: MKNKFAALVITLFVLVLAIDNVTTECLEGCECNQDSTGKTCRPKQGSNVSPAVCLAQYCYHGYC.

An N-terminal signal peptide occupies residues M1 to T24.

The protein belongs to the scolopendra neurotoxin 6 family. Contains 3 disulfide bonds. As to expression, expressed by the venom gland.

The protein resides in the secreted. The polypeptide is Putative neurotoxin 6 (Scolopendra mutilans (Chinese red-headed centipede)).